The sequence spans 122 residues: Large ribosomal subunit protein bL12 (122 aa).

It belongs to the bacterial ribosomal protein bL12 family. As to quaternary structure, homodimer. Part of the ribosomal stalk of the 50S ribosomal subunit. Forms a multimeric L10(L12)X complex, where L10 forms an elongated spine to which 2 to 4 L12 dimers bind in a sequential fashion. Binds GTP-bound translation factors.

Its function is as follows. Forms part of the ribosomal stalk which helps the ribosome interact with GTP-bound translation factors. Is thus essential for accurate translation. The protein is Large ribosomal subunit protein bL12 of Xylella fastidiosa (strain M12).